An 80-amino-acid chain; its full sequence is Cell division activator CedA (80 aa).

The protein belongs to the CedA family.

Activates the cell division inhibited by chromosomal DNA over-replication. In Escherichia coli O1:K1 / APEC, this protein is Cell division activator CedA.